Reading from the N-terminus, the 860-residue chain is Alanine--tRNA ligase (860 aa).

Zn(2+)-binding residues include His-553, His-557, Cys-655, and His-659.

This sequence belongs to the class-II aminoacyl-tRNA synthetase family. The cofactor is Zn(2+).

The protein resides in the cytoplasm. The enzyme catalyses tRNA(Ala) + L-alanine + ATP = L-alanyl-tRNA(Ala) + AMP + diphosphate. Catalyzes the attachment of alanine to tRNA(Ala) in a two-step reaction: alanine is first activated by ATP to form Ala-AMP and then transferred to the acceptor end of tRNA(Ala). Also edits incorrectly charged Ser-tRNA(Ala) and Gly-tRNA(Ala) via its editing domain. This is Alanine--tRNA ligase from Legionella pneumophila (strain Lens).